The chain runs to 98 residues: Large ribosomal subunit protein uL23 (98 aa).

The protein belongs to the universal ribosomal protein uL23 family. As to quaternary structure, part of the 50S ribosomal subunit. Contacts protein L29, and trigger factor when it is bound to the ribosome.

Its function is as follows. One of the early assembly proteins it binds 23S rRNA. One of the proteins that surrounds the polypeptide exit tunnel on the outside of the ribosome. Forms the main docking site for trigger factor binding to the ribosome. The chain is Large ribosomal subunit protein uL23 from Lactobacillus gasseri (strain ATCC 33323 / DSM 20243 / BCRC 14619 / CIP 102991 / JCM 1131 / KCTC 3163 / NCIMB 11718 / NCTC 13722 / AM63).